A 91-amino-acid polypeptide reads, in one-letter code: Large ribosomal subunit protein uL23 (91 aa).

This sequence belongs to the universal ribosomal protein uL23 family. Part of the 50S ribosomal subunit. Contacts protein L29, and trigger factor when it is bound to the ribosome.

Its function is as follows. One of the early assembly proteins it binds 23S rRNA. One of the proteins that surrounds the polypeptide exit tunnel on the outside of the ribosome. Forms the main docking site for trigger factor binding to the ribosome. In Staphylococcus haemolyticus (strain JCSC1435), this protein is Large ribosomal subunit protein uL23.